Consider the following 219-residue polypeptide: EP300-interacting inhibitor of differentiation 2 (219 aa).

Residues 1 to 71 (MSELPADQGV…PVPEAREGPM (71 aa)) form a disordered region. Positions 20-34 (GDVRQAEVGGRRREP) are enriched in basic and acidic residues. R75 carries the omega-N-methylarginine modification. A disordered region spans residues 95 to 115 (AEPAEEEGPEGRPRSRPGNGP).

In terms of assembly, heterodimer with EID2B. Interacts with the C-terminus of EP300. Interacts with HDAC1 and HDAC2. Interacts with SMAD2, SMAD4 and with the MH2 domain of SMAD3.

Its subcellular location is the nucleus. In terms of biological role, interacts with EP300 and acts as a repressor of MYOD-dependent transcription and muscle differentiation. Inhibits EP300 histone acetyltransferase activity. Acts as a repressor of TGFB/SMAD transcriptional responses. May act as a repressor of the TGFB/SMAD3-dependent signaling by selectively blocking formation of TGFB-induced SMAD3-SMAD4 complex. The polypeptide is EP300-interacting inhibitor of differentiation 2 (Bos taurus (Bovine)).